Reading from the N-terminus, the 61-residue chain is uncharacterized protein (61 aa).

This is an uncharacterized protein from Rickettsia conorii (strain ATCC VR-613 / Malish 7).